Consider the following 398-residue polypeptide: Serpin-Z2A (398 aa).

The tract at residues 343–367 (GTEAAAATIAKAVLLSASPPSDMDF) is RCL.

The protein belongs to the serpin family.

Functionally, inhibits chymotrypsin and cathepsin G in vitro. The protein is Serpin-Z2A of Triticum aestivum (Wheat).